The primary structure comprises 245 residues: Farnesol dehydrogenase (245 aa).

Residues 11–40 (VTGA…ARRV) and Asp64 each bind NAD(+). Ser145 provides a ligand contact to substrate. Catalysis depends on Tyr160, which acts as the Proton acceptor. Lys164 lines the NAD(+) pocket.

This sequence belongs to the short-chain dehydrogenases/reductases (SDR) family. In terms of assembly, homodimer. In terms of tissue distribution, highly expressed level in the midgut and brain in adult females, and at lower level in the abdominal and thoracic ganglia. High levels are detected in corpora allata (CA), Malpighian tubules and fat body.

The enzyme catalyses (2E,6E)-farnesol + NADP(+) = (2E,6E)-farnesal + NADPH + H(+). Mediates oxidation of farnesol into farnesal, a precursor of juvenile hormone in the corpora allata (CA), the glands that synthesize juvenile hormone. Able to oxidize C(10) to C(15) isoprenoid and aliphatic alcohols. The sequence is that of Farnesol dehydrogenase from Aedes aegypti (Yellowfever mosquito).